The sequence spans 363 residues: Serpentine receptor class beta-17 (363 aa).

The next 7 helical transmembrane spans lie at 46 to 66 (AFLLVKLYHILLSVISMGSII), 75 to 95 (LLAFHFNIKILFFFQFCSCFL), 120 to 140 (VILAPALFALFNLPLIFSMLC), 169 to 189 (IGFVLTSFAVIVPGLTCLYMY), 214 to 234 (YIFITINVLNVLTLMHSIGLY), 273 to 293 (CAQLIIFLLYGCAMYSLRIFL), and 304 to 324 (VTEFCYTPPLYCAIMPLICIV).

Belongs to the nematode receptor-like protein srb family.

The protein resides in the membrane. In Caenorhabditis elegans, this protein is Serpentine receptor class beta-17 (srb-17).